The following is a 438-amino-acid chain: Ribosomal protein uS12 methylthiotransferase RimO (438 aa).

Residues 5–116 form the MTTase N-terminal domain; the sequence is PTIAISHLGC…IVQVIQRVEN (112 aa). 6 residues coordinate [4Fe-4S] cluster: Cys-14, Cys-50, Cys-79, Cys-154, Cys-158, and Cys-161. The 230-residue stretch at 140-369 folds into the Radical SAM core domain; the sequence is TTSEGVAYLR…MQIQQPISLQ (230 aa). The TRAM domain maps to 372–438; the sequence is CACIGDIVDV…IYDLYGEVIN (67 aa).

Belongs to the methylthiotransferase family. RimO subfamily. [4Fe-4S] cluster serves as cofactor.

Its subcellular location is the cytoplasm. The catalysed reaction is L-aspartate(89)-[ribosomal protein uS12]-hydrogen + (sulfur carrier)-SH + AH2 + 2 S-adenosyl-L-methionine = 3-methylsulfanyl-L-aspartate(89)-[ribosomal protein uS12]-hydrogen + (sulfur carrier)-H + 5'-deoxyadenosine + L-methionine + A + S-adenosyl-L-homocysteine + 2 H(+). In terms of biological role, catalyzes the methylthiolation of an aspartic acid residue of ribosomal protein uS12. The polypeptide is Ribosomal protein uS12 methylthiotransferase RimO (Gloeothece citriformis (strain PCC 7424) (Cyanothece sp. (strain PCC 7424))).